Consider the following 44-residue polypeptide: Protein non-structural 7b (44 aa).

The chain crosses the membrane as a helical span at residues 9–29; it reads FYLCFLAFLLFLVLIMLIIFW.

It localises to the host membrane. The polypeptide is Protein non-structural 7b (Homo sapiens (Human)).